The following is a 123-amino-acid chain: Ribonuclease P protein component (123 aa).

It belongs to the RnpA family. Consists of a catalytic RNA component (M1 or rnpB) and a protein subunit.

The catalysed reaction is Endonucleolytic cleavage of RNA, removing 5'-extranucleotides from tRNA precursor.. RNaseP catalyzes the removal of the 5'-leader sequence from pre-tRNA to produce the mature 5'-terminus. It can also cleave other RNA substrates such as 4.5S RNA. The protein component plays an auxiliary but essential role in vivo by binding to the 5'-leader sequence and broadening the substrate specificity of the ribozyme. This Bordetella petrii (strain ATCC BAA-461 / DSM 12804 / CCUG 43448) protein is Ribonuclease P protein component.